We begin with the raw amino-acid sequence, 420 residues long: Riboflavin biosynthesis protein RibBA (420 aa).

Positions 1–202 (MTTFGTIEQA…IADLVAYRRR (202 aa)) are DHBP synthase. D-ribulose 5-phosphate is bound by residues 28-29 (RE), aspartate 33, 141-145 (RPGHT), and glutamate 165. A Mg(2+)-binding site is contributed by glutamate 29. A Mg(2+)-binding site is contributed by histidine 144. The GTP cyclohydrolase II stretch occupies residues 203–420 (TEKQVELVAE…RAVVGDGIGA (218 aa)). Residue 253–257 (RVHSE) participates in GTP binding. The Zn(2+) site is built by cysteine 258, cysteine 269, and cysteine 271. GTP-binding positions include glutamine 274, 297–299 (EGR), and threonine 319. Aspartate 331 functions as the Proton acceptor; for GTP cyclohydrolase activity in the catalytic mechanism. The Nucleophile; for GTP cyclohydrolase activity role is filled by arginine 333. Residues threonine 354 and lysine 359 each contribute to the GTP site.

The protein in the N-terminal section; belongs to the DHBP synthase family. It in the C-terminal section; belongs to the GTP cyclohydrolase II family. Mg(2+) serves as cofactor. It depends on Mn(2+) as a cofactor. Zn(2+) is required as a cofactor.

The enzyme catalyses D-ribulose 5-phosphate = (2S)-2-hydroxy-3-oxobutyl phosphate + formate + H(+). It carries out the reaction GTP + 4 H2O = 2,5-diamino-6-hydroxy-4-(5-phosphoribosylamino)-pyrimidine + formate + 2 phosphate + 3 H(+). Its pathway is cofactor biosynthesis; riboflavin biosynthesis; 2-hydroxy-3-oxobutyl phosphate from D-ribulose 5-phosphate: step 1/1. The protein operates within cofactor biosynthesis; riboflavin biosynthesis; 5-amino-6-(D-ribitylamino)uracil from GTP: step 1/4. Functionally, catalyzes the conversion of D-ribulose 5-phosphate to formate and 3,4-dihydroxy-2-butanone 4-phosphate. In terms of biological role, catalyzes the conversion of GTP to 2,5-diamino-6-ribosylamino-4(3H)-pyrimidinone 5'-phosphate (DARP), formate and pyrophosphate. The sequence is that of Riboflavin biosynthesis protein RibBA from Salinispora arenicola (strain CNS-205).